A 416-amino-acid chain; its full sequence is Multifunctional CCA protein (416 aa).

ATP is bound by residues glycine 8 and arginine 11. Glycine 8 and arginine 11 together coordinate CTP. Aspartate 21 and aspartate 23 together coordinate Mg(2+). Residues arginine 91, arginine 137, and arginine 140 each contribute to the ATP site. Arginine 91, arginine 137, and arginine 140 together coordinate CTP. Residues 228-329 form the HD domain; sequence TGLHTMMVLA…IKLFDKADFW (102 aa).

The protein belongs to the tRNA nucleotidyltransferase/poly(A) polymerase family. Bacterial CCA-adding enzyme type 1 subfamily. As to quaternary structure, monomer. Can also form homodimers and oligomers. It depends on Mg(2+) as a cofactor. Ni(2+) serves as cofactor.

It catalyses the reaction a tRNA precursor + 2 CTP + ATP = a tRNA with a 3' CCA end + 3 diphosphate. The catalysed reaction is a tRNA with a 3' CCA end + 2 CTP + ATP = a tRNA with a 3' CCACCA end + 3 diphosphate. Its function is as follows. Catalyzes the addition and repair of the essential 3'-terminal CCA sequence in tRNAs without using a nucleic acid template. Adds these three nucleotides in the order of C, C, and A to the tRNA nucleotide-73, using CTP and ATP as substrates and producing inorganic pyrophosphate. tRNA 3'-terminal CCA addition is required both for tRNA processing and repair. Also involved in tRNA surveillance by mediating tandem CCA addition to generate a CCACCA at the 3' terminus of unstable tRNAs. While stable tRNAs receive only 3'-terminal CCA, unstable tRNAs are marked with CCACCA and rapidly degraded. This chain is Multifunctional CCA protein, found in Shewanella sp. (strain MR-7).